We begin with the raw amino-acid sequence, 189 residues long: Peptidyl-tRNA hydrolase (189 aa).

Residue Tyr15 coordinates tRNA. His20 acts as the Proton acceptor in catalysis. 3 residues coordinate tRNA: Tyr67, Asn69, and Asn115.

The protein belongs to the PTH family. As to quaternary structure, monomer.

It localises to the cytoplasm. It carries out the reaction an N-acyl-L-alpha-aminoacyl-tRNA + H2O = an N-acyl-L-amino acid + a tRNA + H(+). Functionally, hydrolyzes ribosome-free peptidyl-tRNAs (with 1 or more amino acids incorporated), which drop off the ribosome during protein synthesis, or as a result of ribosome stalling. Its function is as follows. Catalyzes the release of premature peptidyl moieties from peptidyl-tRNA molecules trapped in stalled 50S ribosomal subunits, and thus maintains levels of free tRNAs and 50S ribosomes. In Symbiobacterium thermophilum (strain DSM 24528 / JCM 14929 / IAM 14863 / T), this protein is Peptidyl-tRNA hydrolase.